The chain runs to 277 residues: ATP synthase subunit a (277 aa).

Helical transmembrane passes span 40-60, 98-118, 154-174, 219-239, and 245-265; these read AWHV…LIIF, SALI…MNLM, DLNL…FYSI, LFGN…IGYF, and FMWA…FMML.

The protein belongs to the ATPase A chain family. F-type ATPases have 2 components, CF(1) - the catalytic core - and CF(0) - the membrane proton channel. CF(1) has five subunits: alpha(3), beta(3), gamma(1), delta(1), epsilon(1). CF(0) has three main subunits: a(1), b(2) and c(9-12). The alpha and beta chains form an alternating ring which encloses part of the gamma chain. CF(1) is attached to CF(0) by a central stalk formed by the gamma and epsilon chains, while a peripheral stalk is formed by the delta and b chains.

Its subcellular location is the cell inner membrane. In terms of biological role, key component of the proton channel; it plays a direct role in the translocation of protons across the membrane. The polypeptide is ATP synthase subunit a (Alteromonas mediterranea (strain DSM 17117 / CIP 110805 / LMG 28347 / Deep ecotype)).